We begin with the raw amino-acid sequence, 280 residues long: 2,3,4,5-tetrahydropyridine-2,6-dicarboxylate N-succinyltransferase (280 aa).

Substrate is bound by residues R107 and D144.

The protein belongs to the transferase hexapeptide repeat family. As to quaternary structure, homotrimer.

It localises to the cytoplasm. It catalyses the reaction (S)-2,3,4,5-tetrahydrodipicolinate + succinyl-CoA + H2O = (S)-2-succinylamino-6-oxoheptanedioate + CoA. Its pathway is amino-acid biosynthesis; L-lysine biosynthesis via DAP pathway; LL-2,6-diaminopimelate from (S)-tetrahydrodipicolinate (succinylase route): step 1/3. This Granulibacter bethesdensis (strain ATCC BAA-1260 / CGDNIH1) protein is 2,3,4,5-tetrahydropyridine-2,6-dicarboxylate N-succinyltransferase.